The chain runs to 337 residues: Phenylpyruvate C(3)-methyltransferase (337 aa).

This sequence belongs to the methyltransferase superfamily.

It carries out the reaction 3-phenylpyruvate + S-adenosyl-L-methionine = (3S)-2-oxo-3-phenylbutanoate + S-adenosyl-L-homocysteine + H(+). Its pathway is antibiotic biosynthesis. S-adenosyl-L-methionine-dependent methyltransferase involved in synthesis of the nonproteinogenic amino acid (2S,3S)-beta-methyl-phenylalanine, a building block of the antibiotic mannopeptimycin. This chain is Phenylpyruvate C(3)-methyltransferase (mppJ), found in Streptomyces hygroscopicus.